The sequence spans 464 residues: MSIGKIIQVIGAVIDVEFQYNDIPNLYHALEVNIDNGNSHQVLILEVVQQLGRSIVRCIAMGSTNGLKRGLDVTNLKHGIQVPVGKETLGRVMDVLGNPIDMKGPINSIEKWSIHRSAPLYEELSSNQELLITGIKVIDLMCPFIKGGKIGLFGGAGVGKTVNIMELIRNIAIEHAGYSVFVGVGERIREGNDFYHEMIHSGILDKVALVYGQMNEPPGNRLRVALTGLTIAEKFRDEGHDVLLFIDNIYRYTLAGTEVSALLGRVPSAVGYQSTLSEEMGMLQERIASTKSGSITSVQAIYVPADDLTDPSPTTTFAHLDATIVLSRQIAALGIYPAVDPLDSYSKQLDPCIVGQEHYDIANNVKSILQRYQELKDIIAILGMDELSEEDKLIVLRSRKIQRFLSQPFFVAEVFTGFSGSYVSLEDTIAGFKEIIDGKYDHLPEQSFYMVGSVKEAIEKSKIL.

154-161 (GGAGVGKT) contacts ATP.

It belongs to the ATPase alpha/beta chains family. F-type ATPases have 2 components, CF(1) - the catalytic core - and CF(0) - the membrane proton channel. CF(1) has five subunits: alpha(3), beta(3), gamma(1), delta(1), epsilon(1). CF(0) has three main subunits: a(1), b(2) and c(9-12). The alpha and beta chains form an alternating ring which encloses part of the gamma chain. CF(1) is attached to CF(0) by a central stalk formed by the gamma and epsilon chains, while a peripheral stalk is formed by the delta and b chains.

Its subcellular location is the cell inner membrane. It carries out the reaction ATP + H2O + 4 H(+)(in) = ADP + phosphate + 5 H(+)(out). Produces ATP from ADP in the presence of a proton gradient across the membrane. The catalytic sites are hosted primarily by the beta subunits. The sequence is that of ATP synthase subunit beta from Blochmanniella floridana.